Here is a 494-residue protein sequence, read N- to C-terminus: Leucine-rich repeat extensin-like protein 4 (494 aa).

The N-terminal stretch at 1-25 (MKNNTTQSLLLLLLFFFFFFEISHS) is a signal peptide. 3 N-linked (GlcNAc...) asparagine glycosylation sites follow: asparagine 60, asparagine 94, and asparagine 106. 9 LRR repeats span residues 121–145 (IRTVAGIDLNHADIAGYLPEELGLL), 146–168 (TDLALFHVNSNRFCGTVPHKFKQ), 169–193 (LKLLFELDLSNNRFAGKFPTVVLHL), 194–217 (PSLKFLDLRFNEFEGTVPKELFSK), 219–240 (LDAIFINHNRFRFELPENFGDS), 242–263 (VSVIVLANNHFHGCIPTSLVEM), 264–287 (KNLNEIIFMNNGLNSCLPADIGRL), 289–311 (NVTVFDVSFNELVGPLPESVGGM), and 312–335 (VEVEQLNVAHNLLSGKIPASICQL). The N-linked (GlcNAc...) asparagine glycan is linked to asparagine 289. A glycan (N-linked (GlcNAc...) asparagine) is linked at asparagine 340. The tract at residues 404 to 494 (SPPIVALPPP…YASPPPPPFY (91 aa)) is contains the Ser-Pro(4) repeats. Over residues 422–479 (PPVYSPPPSPPVFSPPPSPPVYSPPPPPSIHYSSPPPPPVHHSSPPPPSPEFEGPLPP) the composition is skewed to pro residues. The tract at residues 422–482 (PPVYSPPPSP…FEGPLPPVIG (61 aa)) is disordered.

In terms of processing, hydroxylated on proline residues in the S-P-P-P-P repeat. O-glycosylated on hydroxyprolines. As to expression, expressed in roots, stems, leaves and flowers, mostly in vascular tissues.

Its subcellular location is the secreted. It localises to the cell wall. Modulates cell morphogenesis by regulating cell wall formation and assembly, and/or growth polarization. The chain is Leucine-rich repeat extensin-like protein 4 (LRX4) from Arabidopsis thaliana (Mouse-ear cress).